The chain runs to 299 residues: Small ribosomal subunit protein uS3 (299 aa).

A KH type-2 domain is found at 39–107; sequence VREYLKAKLK…PVAVNIEEVR (69 aa). Residues 214-299 form a disordered region; it reads PVIKTDERED…AVAPGDAKGE (86 aa). The span at 217–248 shows a compositional bias: basic and acidic residues; that stretch reads KTDEREDDRRNRRGPRSDRPAGDRRPPSRDGA. Positions 257 to 282 are enriched in low complexity; it reads ADAGAAAPTDKPADGAAPAAADGPKA.

Belongs to the universal ribosomal protein uS3 family. In terms of assembly, part of the 30S ribosomal subunit. Forms a tight complex with proteins S10 and S14.

Its function is as follows. Binds the lower part of the 30S subunit head. Binds mRNA in the 70S ribosome, positioning it for translation. This chain is Small ribosomal subunit protein uS3, found in Methylibium petroleiphilum (strain ATCC BAA-1232 / LMG 22953 / PM1).